The sequence spans 398 residues: Elongation factor Tu (398 aa).

Residues 10–207 form the tr-type G domain; the sequence is KPHVNIGTIG…TVDEYIPEPE (198 aa). A G1 region spans residues 19-26; the sequence is GHVDHGKT. 19-26 contributes to the GTP binding site; the sequence is GHVDHGKT. T26 lines the Mg(2+) pocket. Residues 63–67 are G2; it reads GITIN. Positions 84 to 87 are G3; sequence DAPG. Residues 84 to 88 and 139 to 142 contribute to the GTP site; these read DAPGH and NKVD. Positions 139-142 are G4; it reads NKVD. The tract at residues 177 to 179 is G5; it reads SAL.

Belongs to the TRAFAC class translation factor GTPase superfamily. Classic translation factor GTPase family. EF-Tu/EF-1A subfamily. In terms of assembly, monomer.

It localises to the cytoplasm. It carries out the reaction GTP + H2O = GDP + phosphate + H(+). In terms of biological role, GTP hydrolase that promotes the GTP-dependent binding of aminoacyl-tRNA to the A-site of ribosomes during protein biosynthesis. The chain is Elongation factor Tu from Streptococcus suis (strain 98HAH33).